Here is a 179-residue protein sequence, read N- to C-terminus: Signal peptidase complex subunit 3 (179 aa).

Residues 1 to 12 (MHTVLTRGNATV) are Cytoplasmic-facing. The helical; Signal-anchor for type II membrane protein transmembrane segment at 13–33 (AYTLSVLACLTFSCFLSTVFL) threads the bilayer. Topologically, residues 34-179 (DYRTDANINT…FPADYATSSI (146 aa)) are lumenal. N73 and N141 each carry an N-linked (GlcNAc...) asparagine glycan.

Belongs to the SPCS3 family. In terms of assembly, component of the signal peptidase complex (SPC) composed of a catalytic subunit twr/SEC11 and three accessory subunits Spase12/SPCS1, Spase25/SPCS2 and Spase22-23/SPCS3. The complex induces a local thinning of the ER membrane which is used to measure the length of the signal peptide (SP) h-region of protein substrates. This ensures the selectivity of the complex towards h-regions shorter than 18-20 amino acids.

It is found in the endoplasmic reticulum membrane. Essential component of the signal peptidase complex (SPC) which catalyzes the cleavage of N-terminal signal sequences from nascent proteins as they are translocated into the lumen of the endoplasmic reticulum. Essential for the SPC catalytic activity, possibly by stabilizing and positioning the active center of the complex close to the lumenal surface. In terms of biological role, (Microbial infection) Plays an important role in infection by flaviviruses such as West Nile virus and Dengue virus type 2. This Drosophila melanogaster (Fruit fly) protein is Signal peptidase complex subunit 3 (Spase22-23).